The primary structure comprises 660 residues: MKTVVFAYHDMGCLGIEALLAAGYEISAIFTHTDNPGEKAFYGSVARLAAERGIPVYAPDNVNHPLWVERIAQLSPDVIFSFYYRHLIYDEILQLAPAGAFNLHGSLLPKYRGRAPLNWVLVNGETETGVTLHRMVKRADAGAIVAQLRIAIAPDDIAITLHHKLCHAARQLLEQTLPAIKHGNILEIAQRENEATCFGRRTPDDSFLEWHKPASVLHNMVRAVADPWPGAFSYVGNQKFTVWSSRVHPHASKAQPGSVISVAPLLIACGDGALEIVTGQAGDGITMQGSQLAQTLGLVQGSRLNSQPACTARRRTRVLILGVNGFIGNHLTERLLREDHYEVYGLDIGSDAISRFLNHPHFHFVEGDISIHSEWIEYHVKKCDVVLPLVAIATPIEYTRNPLRVFELDFEENLRIIRYCVKYRKRIIFPSTSEVYGMCSDKYFDEDHSNLIVGPVNKPRWIYSVSKQLLDRVIWAYGEKEGLQFTLFRPFNWMGPRLDNLNAARIGSSRAITQLILNLVEGSPIKLIDGGKQKRCFTDIRDGIEALYRIIENAGNRCDGEIINIGNPENEASIEELGEMLLASFEKHPLRHHFPPFAGFRVVESSSYYGKGYQDVEHRKPSIRNAHRCLDWEPKIDMQETIDETLDFFLRTVDLTDKPS.

Residues 1–304 are formyltransferase ArnAFT; the sequence is MKTVVFAYHD…TLGLVQGSRL (304 aa). 86 to 88 is a (6R)-10-formyltetrahydrofolate binding site; the sequence is HLI. Catalysis depends on histidine 104, which acts as the Proton donor; for formyltransferase activity. (6R)-10-formyltetrahydrofolate contacts are provided by residues arginine 114 and 136–140; that span reads VKRAD. The interval 314–660 is dehydrogenase ArnADH; that stretch reads RRTRVLILGV…RTVDLTDKPS (347 aa). Residues aspartate 347 and 368 to 369 each bind NAD(+); that span reads DI. Residues alanine 393, tyrosine 398, and 432 to 433 contribute to the UDP-alpha-D-glucuronate site; that span reads TS. Glutamate 434 acts as the Proton acceptor; for decarboxylase activity in catalysis. UDP-alpha-D-glucuronate contacts are provided by residues arginine 460, asparagine 492, 526–535, and tyrosine 613; that span reads KLIDGGKQKR. Arginine 619 serves as the catalytic Proton donor; for decarboxylase activity.

In the N-terminal section; belongs to the Fmt family. UDP-L-Ara4N formyltransferase subfamily. The protein in the C-terminal section; belongs to the NAD(P)-dependent epimerase/dehydratase family. UDP-glucuronic acid decarboxylase subfamily. Homohexamer, formed by a dimer of trimers.

It carries out the reaction UDP-alpha-D-glucuronate + NAD(+) = UDP-beta-L-threo-pentopyranos-4-ulose + CO2 + NADH. The enzyme catalyses UDP-4-amino-4-deoxy-beta-L-arabinose + (6R)-10-formyltetrahydrofolate = UDP-4-deoxy-4-formamido-beta-L-arabinose + (6S)-5,6,7,8-tetrahydrofolate + H(+). It functions in the pathway nucleotide-sugar biosynthesis; UDP-4-deoxy-4-formamido-beta-L-arabinose biosynthesis; UDP-4-deoxy-4-formamido-beta-L-arabinose from UDP-alpha-D-glucuronate: step 1/3. Its pathway is nucleotide-sugar biosynthesis; UDP-4-deoxy-4-formamido-beta-L-arabinose biosynthesis; UDP-4-deoxy-4-formamido-beta-L-arabinose from UDP-alpha-D-glucuronate: step 3/3. The protein operates within bacterial outer membrane biogenesis; lipopolysaccharide biosynthesis. Its function is as follows. Bifunctional enzyme that catalyzes the oxidative decarboxylation of UDP-glucuronic acid (UDP-GlcUA) to UDP-4-keto-arabinose (UDP-Ara4O) and the addition of a formyl group to UDP-4-amino-4-deoxy-L-arabinose (UDP-L-Ara4N) to form UDP-L-4-formamido-arabinose (UDP-L-Ara4FN). The modified arabinose is attached to lipid A and is required for resistance to polymyxin and cationic antimicrobial peptides. The chain is Bifunctional polymyxin resistance protein ArnA from Escherichia coli (strain K12 / MC4100 / BW2952).